The sequence spans 137 residues: Nucleoside diphosphate kinase (137 aa).

The ATP site is built by lysine 9, phenylalanine 57, arginine 85, threonine 91, arginine 102, and asparagine 112. The active-site Pros-phosphohistidine intermediate is histidine 115.

Belongs to the NDK family. In terms of assembly, homotetramer. It depends on Mg(2+) as a cofactor.

Its subcellular location is the cytoplasm. The enzyme catalyses a 2'-deoxyribonucleoside 5'-diphosphate + ATP = a 2'-deoxyribonucleoside 5'-triphosphate + ADP. It catalyses the reaction a ribonucleoside 5'-diphosphate + ATP = a ribonucleoside 5'-triphosphate + ADP. Functionally, major role in the synthesis of nucleoside triphosphates other than ATP. The ATP gamma phosphate is transferred to the NDP beta phosphate via a ping-pong mechanism, using a phosphorylated active-site intermediate. The chain is Nucleoside diphosphate kinase from Campylobacter jejuni subsp. jejuni serotype O:2 (strain ATCC 700819 / NCTC 11168).